The following is a 422-amino-acid chain: Mitochondrial distribution and morphology protein 12 (422 aa).

Positions 1 to 386 (MSFDINWNQL…WPSWICIDMN (386 aa)) constitute an SMP-LTD domain. Disordered regions lie at residues 74-134 (GATN…HDLG) and 387-422 (DDGDDDDDDEVEDSNVSDGDGKDNDGKHGDGPTHEV). Composition is skewed to acidic residues over residues 109–130 (FDDDDDDDEGVDEDDDDDEYDD) and 387–401 (DDGDDDDDDEVEDSN). Basic and acidic residues predominate over residues 405–422 (GDGKDNDGKHGDGPTHEV).

This sequence belongs to the MDM12 family. As to quaternary structure, component of the ER-mitochondria encounter structure (ERMES) or MDM complex, composed of MMM1, MDM10, MDM12 and MDM34. An MMM1 homodimer associates with one molecule of MDM12 on each side in a pairwise head-to-tail manner, and the SMP-LTD domains of MMM1 and MDM12 generate a continuous hydrophobic tunnel for phospholipid trafficking.

The protein localises to the mitochondrion outer membrane. The protein resides in the endoplasmic reticulum membrane. Its function is as follows. Component of the ERMES/MDM complex, which serves as a molecular tether to connect the endoplasmic reticulum (ER) and mitochondria. Components of this complex are involved in the control of mitochondrial shape and protein biogenesis, and function in nonvesicular lipid trafficking between the ER and mitochondria. MDM12 is required for the interaction of the ER-resident membrane protein MMM1 and the outer mitochondrial membrane-resident beta-barrel protein MDM10. The MDM12-MMM1 subcomplex functions in the major beta-barrel assembly pathway that is responsible for biogenesis of all mitochondrial outer membrane beta-barrel proteins, and acts in a late step after the SAM complex. The MDM10-MDM12-MMM1 subcomplex further acts in the TOM40-specific pathway after the action of the MDM12-MMM1 complex. Essential for establishing and maintaining the structure of mitochondria and maintenance of mtDNA nucleoids. This chain is Mitochondrial distribution and morphology protein 12, found in Candida dubliniensis (strain CD36 / ATCC MYA-646 / CBS 7987 / NCPF 3949 / NRRL Y-17841) (Yeast).